Consider the following 442-residue polypeptide: O-acetyl-L-homoserine sulfhydrylase (442 aa).

Residues 1-32 (MVGPSGESMPRNFKPETIALHGGQEPDPTTTS) form a disordered region. The residue at position 216 (lysine 216) is an N6-(pyridoxal phosphate)lysine.

It belongs to the trans-sulfuration enzymes family. It depends on pyridoxal 5'-phosphate as a cofactor.

It carries out the reaction O-acetyl-L-homoserine + hydrogen sulfide = L-homocysteine + acetate. Its pathway is amino-acid biosynthesis; L-methionine biosynthesis via de novo pathway; L-homocysteine from O-acetyl-L-homoserine: step 1/1. With respect to regulation, feedback inhibited at very high concentrations of methionine or S-adenosylmethionine. Functionally, catalyzes the conversion of O-acetyl-L-homoserine (OAH) into homocysteine in the methionine biosynthesis pathway. Can also use O-succinyl-homoserine (OSH), although at low efficiency. This is O-acetyl-L-homoserine sulfhydrylase from Leptospira meyeri.